The sequence spans 492 residues: MMSKIFDLVVIGAGSGGLEAAWNAATLYKKRVAVIDVQMVHGPPFFSALGGTCVNVGCVPKKLMVTGAQYMEHLRESAGFGWEFDRTTLRAEWKKLIAVKDEAVLNINKSYEEMFRDTEGLEFFLGWGSLESKNVVNVRESADPASAVKERLETENILLASGSWPHMPNIPGIEHCISSNEAFYLPEPPRRVLTVGGGFISVEFAGIFNAYKPKDGQVTLCYRGEMILRGFDHTLREELTKQLTANGIQILTKENPAKVELNADGSKSVTFESGKKMDFDLVMMAIGRSPRTKDLQLQNAGVMIKNGGVQVDEYSRTNVSNIYAIGDVTNRVMLTPVAINEAAALVDTVFGTNPRKTDHTRVASAVFSIPPIGTCGLIEEVASKRYEVVAVYLSSFTPLMHNISGSKYKTFVAKIITNHSDGTVLGVHLLGDNAPEIIQGVGICLKLNAKISDFYNTIGVHPTSAEELCSMRTPSYYYVKGEKMEKPSEASL.

FAD is bound at residue 36 to 52 (DVQMVHGPPFFSALGGT). Cysteine 53 and cysteine 58 form a disulfide bridge. Residue histidine 461 is the Proton acceptor of the active site.

This sequence belongs to the class-I pyridine nucleotide-disulfide oxidoreductase family. As to quaternary structure, homodimer. FAD is required as a cofactor.

The protein resides in the cytoplasm. It carries out the reaction trypanothione + NADP(+) = trypanothione disulfide + NADPH + H(+). In terms of biological role, trypanothione is the parasite analog of glutathione; this enzyme is the equivalent of glutathione reductase. The protein is Trypanothione reductase (TPR) of Trypanosoma cruzi.